A 193-amino-acid polypeptide reads, in one-letter code: Ion-translocating oxidoreductase complex subunit A (193 aa).

The next 6 membrane-spanning stretches (helical) occupy residues 5-25 (LLLF…FLGL), 39-59 (IGMG…AWMV), 62-82 (FILL…LVIA), 102-122 (LLGI…VALL), 134-154 (AVYG…FAAI), and 171-191 (SIAL…TGLV).

It belongs to the NqrDE/RnfAE family. The complex is composed of six subunits: RnfA, RnfB, RnfC, RnfD, RnfE and RnfG.

Its subcellular location is the cell inner membrane. Functionally, part of a membrane-bound complex that couples electron transfer with translocation of ions across the membrane. This chain is Ion-translocating oxidoreductase complex subunit A, found in Yersinia pestis bv. Antiqua (strain Nepal516).